The following is a 292-amino-acid chain: AKT-interacting protein homolog B (292 aa).

A disordered region spans residues 1–44 (MNPFWNMPSASVRKRSDNDEKIATADQKISPARSSSAKKQLPSI). Residues 14–23 (KRSDNDEKIA) show a composition bias toward basic and acidic residues. Residues 75-223 (YLEYSLLAEF…VVDSVKLCNS (149 aa)) enclose the UBC core domain.

It belongs to the ubiquitin-conjugating enzyme family. FTS subfamily.

Its subcellular location is the cytoplasm. It localises to the cell membrane. May function to promote vesicle trafficking and/or fusion. May also regulate apoptosis. In Xenopus laevis (African clawed frog), this protein is AKT-interacting protein homolog B (aktip-b).